The chain runs to 307 residues: Elongation factor Ts (307 aa).

The involved in Mg(2+) ion dislocation from EF-Tu stretch occupies residues 80-83 (TDFV).

Belongs to the EF-Ts family.

It localises to the cytoplasm. Functionally, associates with the EF-Tu.GDP complex and induces the exchange of GDP to GTP. It remains bound to the aminoacyl-tRNA.EF-Tu.GTP complex up to the GTP hydrolysis stage on the ribosome. The polypeptide is Elongation factor Ts (Clostridium botulinum (strain Kyoto / Type A2)).